The primary structure comprises 617 residues: Protein fem-1 homolog C (617 aa).

M1 is modified (N-acetylmethionine). ANK repeat units lie at residues 2 to 31 (DLKT…KEEV), 40 to 70 (NGAT…SIEV), 82 to 111 (EGAP…SVNN), 115 to 144 (TNST…DLEV), 148 to 177 (HGHT…DVNR), 181 to 210 (KGNT…KMEK), and 213 to 242 (YGMT…TSKT). 2 TPR repeats span residues 245–279 (INAL…RYSD) and 338–371 (SYYI…QQNN). ANK repeat units follow at residues 481-523 (NNFS…DVNV) and 527-556 (DDNS…HFDA).

It belongs to the fem-1 family. In terms of assembly, component of a CRL2 E3 ubiquitin-protein ligase complex, also named ECS (Elongin BC-CUL2/5-SOCS-box protein) complex, composed of CUL2, Elongin BC (ELOB and ELOC), RBX1 and substrate-specific adapter FEM1C.

It participates in protein modification; protein ubiquitination. In terms of biological role, substrate-recognition component of a Cul2-RING (CRL2) E3 ubiquitin-protein ligase complex of the DesCEND (destruction via C-end degrons) pathway, which recognizes a C-degron located at the extreme C terminus of target proteins, leading to their ubiquitination and degradation. The C-degron recognized by the DesCEND pathway is usually a motif of less than ten residues and can be present in full-length proteins, truncated proteins or proteolytically cleaved forms. The CRL2(FEM1C) complex specifically recognizes proteins with an arginine at the C-terminus: recognizes and binds proteins ending with -Lys/Arg-Xaa-Arg and -Lys/Arg-Xaa-Xaa-Arg C-degrons, such as SIL1 or OR51B2, leading to their ubiquitination and degradation. The CRL2(FEM1C) complex mediates ubiquitination and degradation of truncated MSRB1/SEPX1 selenoproteins produced by failed UGA/Sec decoding. In Bos taurus (Bovine), this protein is Protein fem-1 homolog C.